Reading from the N-terminus, the 332-residue chain is 2,7-dihydroxy-5-methyl-1-naphthoate 7-O-methyltransferase (332 aa).

Arginine 11 is a substrate binding site. S-adenosyl-L-methionine is bound by residues tryptophan 133, histidine 153, 175–179 (DVGGG), glycine 177, aspartate 200, 227–228 (SF), and 242–243 (SA). Catalysis depends on histidine 246, which acts as the Proton acceptor. Residue aspartate 247 coordinates substrate.

This sequence belongs to the class I-like SAM-binding methyltransferase superfamily. Cation-independent O-methyltransferase family.

The catalysed reaction is 2,7-dihydroxy-5-methyl-1-naphthoate + S-adenosyl-L-methionine = 2-hydroxy-7-methoxy-5-methyl-1-naphthoate + S-adenosyl-L-homocysteine + H(+). The protein operates within antibiotic biosynthesis. Functionally, S-adenosyl-L-methionine-dependent O-methyltransferase that catalyzes regiospecific methylation at the 7-hydroxy group of 2,7-dihydroxy-5-methyl-1-naphthoate in the biosynthesis of the naphthoate moiety of the neocarzinostatin chromophore. Also recognizes other dihydroxynaphthoate as substrates and catalyzes their regiospecific O-methylation. The carboxylate and its ortho-hydroxy groups of the substrate appear to be crucial for NcsB1 substrate recognition and binding, and O-methylation takes place only at the free hydroxy group of these dihydroxynaphthoic acids. This Streptomyces carzinostaticus protein is 2,7-dihydroxy-5-methyl-1-naphthoate 7-O-methyltransferase.